A 281-amino-acid chain; its full sequence is Acyclic carotenoid 1,2-hydratase (281 aa).

It belongs to the CrtC hydratase family.

The enzyme catalyses rhodopin = all-trans-lycopene + H2O. The catalysed reaction is 1,1'-dihydroxy-1,1',2,2'-tetrahydrolycopene = rhodopin + H2O. It participates in carotenoid biosynthesis; spheroidene biosynthesis. In terms of biological role, involved in the biosynthesis of carotenoids spheroidene and spirilloxanthin. Catalyzes the hydration of neurosporene to the corresponding hydroxylated carotenoids 1-HO-neurosporene and that of lycopene to 1-HO-lycopene. It exhibits negligible activity in converting HO-neurosporene, HO-lycopene, or any other derivative such as spheroidene, 1-HO-3,4-didehydrolycopene. This chain is Acyclic carotenoid 1,2-hydratase (crtC), found in Rhodobacter capsulatus (strain ATCC BAA-309 / NBRC 16581 / SB1003).